A 303-amino-acid chain; its full sequence is Hemolysin E (303 aa).

A disulfide bond links cysteine 87 and cysteine 285. Residues 183 to 203 (AGVVAGPFGLIISYSIAAGVV) traverse the membrane as a helical segment.

The protein belongs to the hemolysin E family. In terms of assembly, monomer and oligomer. In periplasm, it is present as a monomer, while in outer membrane vesicles, it oligomerizes to form a pore structure that is active. The pore is formed by a dodecamer. In terms of processing, in periplasm, it forms a disulfide bond, which prevents the oligomerization. In outer membrane vesicles, the redox status prevents formation of the disulfide bond, leading to oligomerization and pore formation.

It is found in the secreted. It localises to the periplasm. The protein resides in the host cell membrane. Toxin, which has some hemolytic activity towards mammalian cells. Acts by forming a pore-like structure upon contact with mammalian cells. The protein is Hemolysin E (hlyE) of Escherichia coli O157:H7.